The following is a 780-amino-acid chain: Zinc finger and SCAN domain-containing protein 10 (780 aa).

The tract at residues 1 to 38 (MLGESVPAAVEQEQLGEVKLEEEEAVSPEDPRRPESRL) is disordered. Over residues 29-38 (EDPRRPESRL) the composition is skewed to basic and acidic residues. One can recognise an SCAN box domain in the interval 56-126 (MGPRASLSRL…LLLEGIHREP (71 aa)). Disordered stretches follow at residues 153–237 (GCAS…SRDQ) and 255–324 (KAWP…GSLL). Residues serine 162 and serine 208 each carry the phosphoserine modification. A compositionally biased stretch (polar residues) spans 202 to 224 (SSKQPLSPGPQKTFQALQESSPQ). Position 268 is a phosphothreonine (threonine 268). Over residues 268 to 280 (TPDKEEFKQEEPK) the composition is skewed to basic and acidic residues. 14 consecutive C2H2-type zinc fingers follow at residues 347 to 370 (FICA…LRSH), 376 to 398 (FLCL…MRTH), 404 to 426 (HACH…LLTH), 432 to 454 (FLCA…LLAH), 476 to 498 (VLCS…LRIH), 522 to 544 (FVCS…RRVH), 550 to 572 (FSCQ…QRVH), 578 to 600 (YACP…LLTH), 606 to 628 (HHCT…QRSH), 634 to 656 (CRCS…QRIH), 662 to 684 (HACD…RRSH), 690 to 712 (YSCQ…LATH), 724 to 746 (QECV…LLVH), and 752 to 774 (YSCT…LRTH). Glutamine 483 is modified (N5-methylglutamine). Positions 492-520 (KRHLRIHARDKDRRSSEGSGSRRRDSDRR) are disordered. Basic and acidic residues predominate over residues 498 to 520 (HARDKDRRSSEGSGSRRRDSDRR).

In terms of assembly, interacts with POU5F1/OCT4 and SOX2. Methylated at Gln-483 by N6AMT1.

The protein localises to the nucleus. Embryonic stem (ES) cell-specific transcription factor required to maintain ES cell pluripotency. Can both activate and /or repress expression of target genes, depending on the context. Specifically binds the 5'-[GA]CGCNNGCG[CT]-3' DNA consensus sequence. Regulates expression of POU5F1/OCT4, ZSCAN4 and ALYREF/THOC4. The sequence is that of Zinc finger and SCAN domain-containing protein 10 (ZSCAN10) from Homo sapiens (Human).